Consider the following 58-residue polypeptide: Small ribosomal subunit protein eS31 (58 aa).

4 residues coordinate Zn(2+): cysteine 29, cysteine 32, cysteine 48, and cysteine 51. The C4-type zinc finger occupies 29 to 51 (CPRCGSFMAHHLKPVPRWHCGKC).

This sequence belongs to the eukaryotic ribosomal protein eS31 family. As to quaternary structure, part of the 30S ribosomal subunit. Zn(2+) is required as a cofactor.

This Ignicoccus hospitalis (strain KIN4/I / DSM 18386 / JCM 14125) protein is Small ribosomal subunit protein eS31.